The primary structure comprises 212 residues: Nuclear transcription factor Y subunit C-7 (212 aa).

Residues 1–10 are compositionally biased toward polar residues; sequence MEENNGNNNH. 2 disordered regions span residues 1–23 and 190–212; these read MEEN…LPPP and EWPA…SGGN.

This sequence belongs to the NFYC/HAP5 subunit family. In terms of assembly, heterotrimeric transcription factor composed of three components, NF-YA, NF-YB and NF-YC. NF-YB and NF-YC must interact and dimerize for NF-YA association and DNA binding. In terms of tissue distribution, expressed in flowers.

Its subcellular location is the nucleus. In terms of biological role, stimulates the transcription of various genes by recognizing and binding to a CCAAT motif in promoters. This chain is Nuclear transcription factor Y subunit C-7 (NFYC7), found in Arabidopsis thaliana (Mouse-ear cress).